Reading from the N-terminus, the 527-residue chain is 2-isopropylmalate synthase (527 aa).

A Pyruvate carboxyltransferase domain is found at 18–280 (IRIFDTTLRD…QTNINSKRLV (263 aa)). Residues Asp-27, His-215, His-217, and Asn-251 each coordinate Mn(2+). The regulatory domain stretch occupies residues 405 to 527 (TLVDYEVTSG…ASDPGELPQP (123 aa)).

The protein belongs to the alpha-IPM synthase/homocitrate synthase family. LeuA type 1 subfamily. Homodimer. The cofactor is Mn(2+).

The protein resides in the cytoplasm. The enzyme catalyses 3-methyl-2-oxobutanoate + acetyl-CoA + H2O = (2S)-2-isopropylmalate + CoA + H(+). It functions in the pathway amino-acid biosynthesis; L-leucine biosynthesis; L-leucine from 3-methyl-2-oxobutanoate: step 1/4. Its function is as follows. Catalyzes the condensation of the acetyl group of acetyl-CoA with 3-methyl-2-oxobutanoate (2-ketoisovalerate) to form 3-carboxy-3-hydroxy-4-methylpentanoate (2-isopropylmalate). The chain is 2-isopropylmalate synthase from Rhodopirellula baltica (strain DSM 10527 / NCIMB 13988 / SH1).